Here is a 97-residue protein sequence, read N- to C-terminus: UPF0223 protein lp_2149 (97 aa).

Belongs to the UPF0223 family.

This is UPF0223 protein lp_2149 from Lactiplantibacillus plantarum (strain ATCC BAA-793 / NCIMB 8826 / WCFS1) (Lactobacillus plantarum).